Here is a 319-residue protein sequence, read N- to C-terminus: MPNVDDIRIFHGSANPSLAENVAKELNTTIGNALISRFSDGEIRFEIEENVRGRDIYLIQSTGHPTNEHVMELILMGDAFRRASAASITAVVPYFGYARQDRRVRSSRVPISAKVVADMMQKVGFSRLITVDLHADQIQGFFYMPVDNIYASITALEEYRLLDKLETPMIVSPDVGGVVRARAIAKRLNDSDLAIIDKRRPAPNQAEVMNVIGNVQNRHCVIVDDIVDTAGTLCHAASALKEKGALTVSSYCTHPVLSGNAVKNIMDSDIDELIVTDTIPLHEEAAKCRKITQISLSRLIAETISRINQKESVSSMFLD.

ATP-binding positions include 40–42 (DGE) and 99–100 (RQ). Mg(2+) contacts are provided by histidine 134 and aspartate 174. Lysine 198 is a catalytic residue. Residues arginine 200, aspartate 224, and 228-232 (DTAGT) each bind D-ribose 5-phosphate.

This sequence belongs to the ribose-phosphate pyrophosphokinase family. Class I subfamily. In terms of assembly, homohexamer. It depends on Mg(2+) as a cofactor.

It is found in the cytoplasm. It catalyses the reaction D-ribose 5-phosphate + ATP = 5-phospho-alpha-D-ribose 1-diphosphate + AMP + H(+). It participates in metabolic intermediate biosynthesis; 5-phospho-alpha-D-ribose 1-diphosphate biosynthesis; 5-phospho-alpha-D-ribose 1-diphosphate from D-ribose 5-phosphate (route I): step 1/1. Its function is as follows. Involved in the biosynthesis of the central metabolite phospho-alpha-D-ribosyl-1-pyrophosphate (PRPP) via the transfer of pyrophosphoryl group from ATP to 1-hydroxyl of ribose-5-phosphate (Rib-5-P). The chain is Ribose-phosphate pyrophosphokinase from Coxiella burnetii (strain RSA 493 / Nine Mile phase I).